A 366-amino-acid polypeptide reads, in one-letter code: Glycerol-3-phosphate dehydrogenase [NAD(+)], glycosomal (366 aa).

Residues 22–27 (GSGAFG), Phe-97, Lys-125, and Ala-157 each bind NAD(+). Lys-125 serves as a coordination point for substrate. Lys-210 serves as the catalytic Proton acceptor. NAD(+) is bound by residues Arg-274, Val-298, and Glu-300. Residue 274-275 (RN) participates in substrate binding. The Microbody targeting signal signature appears at 364–366 (SKL).

It belongs to the NAD-dependent glycerol-3-phosphate dehydrogenase family. In terms of assembly, homodimer.

The protein localises to the glycosome. The catalysed reaction is sn-glycerol 3-phosphate + NAD(+) = dihydroxyacetone phosphate + NADH + H(+). This Leishmania mexicana protein is Glycerol-3-phosphate dehydrogenase [NAD(+)], glycosomal (GPD).